Here is a 937-residue protein sequence, read N- to C-terminus: Aconitate hydratase A (937 aa).

Residues 410–450 (MANEGGFQPGSTSDLDNYNASWPGEGESAAANAEGRPSNPV) are disordered. Residues 418–429 (PGSTSDLDNYNA) are compositionally biased toward polar residues. The segment covering 433–444 (GEGESAAANAEG) has biased composition (low complexity). Residues Cys-475, Cys-541, and Cys-544 each contribute to the [4Fe-4S] cluster site.

It belongs to the aconitase/IPM isomerase family. In terms of assembly, monomer. It depends on [4Fe-4S] cluster as a cofactor.

The enzyme catalyses citrate = D-threo-isocitrate. It catalyses the reaction (2S,3R)-3-hydroxybutane-1,2,3-tricarboxylate = 2-methyl-cis-aconitate + H2O. It functions in the pathway carbohydrate metabolism; tricarboxylic acid cycle; isocitrate from oxaloacetate: step 2/2. The protein operates within organic acid metabolism; propanoate degradation. Involved in the catabolism of short chain fatty acids (SCFA) via the tricarboxylic acid (TCA)(acetyl degradation route) and probably via the 2-methylcitrate cycle I (propionate degradation route). Catalyzes the reversible isomerization of citrate to isocitrate via cis-aconitate. Could catalyze the hydration of 2-methyl-cis-aconitate to yield (2R,3S)-2-methylisocitrate. The apo form of AcnA functions as a RNA-binding regulatory protein. This is Aconitate hydratase A (acn) from Corynebacterium efficiens (strain DSM 44549 / YS-314 / AJ 12310 / JCM 11189 / NBRC 100395).